We begin with the raw amino-acid sequence, 186 residues long: NADH-dependent FMN reductase SfnE (186 aa).

It belongs to the SsuE family.

It carries out the reaction FMNH2 + NAD(+) = FMN + NADH + 2 H(+). Functionally, involved in the dimethyl sulfide degradation pathway. Catalyzes the NADH-dependent reduction of FMN. This chain is NADH-dependent FMN reductase SfnE, found in Pseudomonas putida (Arthrobacter siderocapsulatus).